The chain runs to 227 residues: Phosphoribosylformylglycinamidine synthase subunit PurQ (227 aa).

Residues 3-225 (FAVIVFPGSN…LKYWRETYVV (223 aa)) enclose the Glutamine amidotransferase type-1 domain. Cys-86 functions as the Nucleophile in the catalytic mechanism. Active-site residues include His-194 and Glu-196.

In terms of assembly, part of the FGAM synthase complex composed of 1 PurL, 1 PurQ and 2 PurS subunits.

The protein resides in the cytoplasm. It carries out the reaction N(2)-formyl-N(1)-(5-phospho-beta-D-ribosyl)glycinamide + L-glutamine + ATP + H2O = 2-formamido-N(1)-(5-O-phospho-beta-D-ribosyl)acetamidine + L-glutamate + ADP + phosphate + H(+). The enzyme catalyses L-glutamine + H2O = L-glutamate + NH4(+). It functions in the pathway purine metabolism; IMP biosynthesis via de novo pathway; 5-amino-1-(5-phospho-D-ribosyl)imidazole from N(2)-formyl-N(1)-(5-phospho-D-ribosyl)glycinamide: step 1/2. In terms of biological role, part of the phosphoribosylformylglycinamidine synthase complex involved in the purines biosynthetic pathway. Catalyzes the ATP-dependent conversion of formylglycinamide ribonucleotide (FGAR) and glutamine to yield formylglycinamidine ribonucleotide (FGAM) and glutamate. The FGAM synthase complex is composed of three subunits. PurQ produces an ammonia molecule by converting glutamine to glutamate. PurL transfers the ammonia molecule to FGAR to form FGAM in an ATP-dependent manner. PurS interacts with PurQ and PurL and is thought to assist in the transfer of the ammonia molecule from PurQ to PurL. This chain is Phosphoribosylformylglycinamidine synthase subunit PurQ, found in Bacillus cytotoxicus (strain DSM 22905 / CIP 110041 / 391-98 / NVH 391-98).